A 325-amino-acid polypeptide reads, in one-letter code: Mitochondrial amidoxime-reducing component 1 (325 aa).

Over 1-16 (MDLKEAFATIFDQNRK) the chain is Mitochondrial matrix. A helical; Signal-anchor for type II membrane protein transmembrane segment spans residues 17–36 (VALYAAGTTVAVLGLGLVFK). Residues 37–325 (YMRREEKLTR…VGEPVYKITY (289 aa)) are Cytoplasmic-facing. 3 residues coordinate Mo-molybdopterin: Lys59, Ser60, and Arg84. The MOSC N-terminal region stretch occupies residues 85–175 (HWLVITEDGH…ADKPVRLVHY (91 aa)). The 145-residue stretch at 179–323 (LKPQRPHEKE…LHVGEPVYKI (145 aa)) folds into the MOSC domain. 4 residues coordinate Mo-molybdopterin: Arg230, Arg264, Cys265, and Tyr305.

Mo-molybdopterin serves as cofactor.

It localises to the mitochondrion outer membrane. Its subcellular location is the membrane. It carries out the reaction N(omega)-hydroxy-L-arginine + 2 Fe(II)-[cytochrome b5] + 2 H(+) = L-arginine + 2 Fe(III)-[cytochrome b5] + H2O. Catalyzes the reduction of N-oxygenated molecules, acting as a counterpart of cytochrome P450 and flavin-containing monooxygenases in metabolic cycles. As a component of prodrug-converting system, reduces a multitude of N-hydroxylated prodrugs particularly amidoximes, leading to increased drug bioavailability. May be involved in mitochondrial N(omega)-hydroxy-L-arginine (NOHA) reduction, regulating endogenous nitric oxide levels and biosynthesis. Postulated to cleave the N-OH bond of N-hydroxylated substrates in concert with electron transfer from NADH to cytochrome b5 reductase then to cytochrome b5, the ultimate electron donor that primes the active site for substrate reduction. The chain is Mitochondrial amidoxime-reducing component 1 (mtarc1) from Danio rerio (Zebrafish).